We begin with the raw amino-acid sequence, 398 residues long: Secreted aspartic protease 3 (398 aa).

A signal peptide spans 1–18 (MFLKNIFIALAIALLADA). The propeptide at 19–58 (TPTTFNNSPGFVALNFDVIKTHKNVTGPQGEINTNVNVKR) is activation peptide. N-linked (GlcNAc...) asparagine glycosylation occurs at N42. One can recognise a Peptidase A1 domain in the interval 72 to 384 (YASDITVGSN…DLDDNEISLA (313 aa)). Residue D90 is part of the active site. 90-92 (DTG) contributes to the pepstatin A binding site. A compositionally biased stretch (polar residues) spans 103-112 (VSCQAGQGQD). The segment at 103–139 (VSCQAGQGQDPNFCKNEGTYSPSSSSSSQNLNSPFSI) is disordered. Residues C105 and C116 are joined by a disulfide bond. Residues 123-138 (SPSSSSSSQNLNSPFS) show a composition bias toward low complexity. Pepstatin A is bound at residue 140–143 (EYGD). Zn(2+)-binding residues include H188, D248, H254, and D270. D274 is an active-site residue. 274-278 (DSGTT) provides a ligand contact to pepstatin A. A disulfide bond links C312 and C350. N-linked (GlcNAc...) asparagine glycosylation occurs at N313.

The protein belongs to the peptidase A1 family. In terms of assembly, monomer.

It is found in the secreted. It catalyses the reaction Preferential cleavage at the carboxyl of hydrophobic amino acids, but fails to cleave 15-Leu-|-Tyr-16, 16-Tyr-|-Leu-17 and 24-Phe-|-Phe-25 of insulin B chain. Activates trypsinogen, and degrades keratin.. Its activity is regulated as follows. Inhibited by pepstatin A analogs. Its function is as follows. Secreted aspartic peptidases (SAPs) are a group of ten acidic hydrolases considered as key virulence factors. These enzymes supply the fungus with nutrient amino acids as well as are able to degrade the selected host's proteins involved in the immune defense. Induces host inflammatory cytokine production in a proteolytic activity-independent way. Moreover, acts toward human hemoglobin though limited proteolysis to generate a variety of antimicrobial hemocidins, enabling to compete with the other microorganisms of the same physiological niche using the microbicidal peptides generated from the host protein. In terms of biological role, plays a key role in defense against host by cleaving histatin-5 (Hst 5), a peptide from human saliva that carries out fungicidal activity. The cleavage rate decreases in an order of SAP2 &gt; SAP9 &gt; SAP3 &gt; SAP7 &gt; SAP4 &gt; SAP1 &gt; SAP8. The first cleavage occurs between residues 'Lys-17' and 'His-18' of Hst 5, giving DSHAKRHHGYKRKFHEK and HHSHRGY peptides. Simultaneously, the DSHAKRHHGYKRK peptide is also formed. Further fragmentation by SAP3 results in DSHAKRHHGY and KRKFHEK products. In Candida albicans (strain SC5314 / ATCC MYA-2876) (Yeast), this protein is Secreted aspartic protease 3.